The chain runs to 259 residues: Global transcriptional regulator CodY (259 aa).

The tract at residues 1 to 155 (MDLLSRARKI…GATVVGMEIL (155 aa)) is GAF domain. The H-T-H motif DNA-binding region spans 203–222 (ASKIADRVGITRSVIVNALR). At serine 215 the chain carries Phosphoserine.

The protein belongs to the CodY family.

The protein resides in the cytoplasm. DNA-binding global transcriptional regulator which is involved in the adaptive response to starvation and acts by directly or indirectly controlling the expression of numerous genes in response to nutrient availability. During rapid exponential growth, CodY is highly active and represses genes whose products allow adaptation to nutrient depletion. The polypeptide is Global transcriptional regulator CodY (Oceanobacillus iheyensis (strain DSM 14371 / CIP 107618 / JCM 11309 / KCTC 3954 / HTE831)).